The sequence spans 407 residues: Arginine deiminase (407 aa).

Catalysis depends on Cys-397, which acts as the Amidino-cysteine intermediate.

This sequence belongs to the arginine deiminase family.

The protein resides in the cytoplasm. It carries out the reaction L-arginine + H2O = L-citrulline + NH4(+). Its pathway is amino-acid degradation; L-arginine degradation via ADI pathway; carbamoyl phosphate from L-arginine: step 1/2. This chain is Arginine deiminase, found in Limosilactobacillus fermentum (strain NBRC 3956 / LMG 18251) (Lactobacillus fermentum).